We begin with the raw amino-acid sequence, 236 residues long: Lipid A 4'-phosphatase (236 aa).

The next 5 helical transmembrane spans lie at 26-46, 58-78, 134-153, 160-182, and 200-220; these read FFYL…FLFF, FIVG…SSFF, YTWT…IYIG, IIPG…LYAR, and GDSI…MLCM.

This sequence belongs to the lipid A LpxF 4'-phosphatase family.

It localises to the cell inner membrane. The protein operates within bacterial outer membrane biogenesis; LPS lipid A biosynthesis. Its function is as follows. Removes the 4'-phosphate group from lipid A species. Absence of phosphate groups in lipid A renders the bacteria resistant to host-derived cationic antimicrobial peptides (CAMP) and allows it to camouflage itself from the host innate immune response. Removal of the 4'-phosphate may be required to generate the substrate for deacylation of the pentaacyl lipid A to the tetraccylated lipid A species. The sequence is that of Lipid A 4'-phosphatase from Porphyromonas gingivalis (strain ATCC 33277 / DSM 20709 / CIP 103683 / JCM 12257 / NCTC 11834 / 2561).